Reading from the N-terminus, the 2446-residue chain is Transcription factor HIVEP2 (2446 aa).

The disordered stretch occupies residues 1–93 (MDTGDTALGQ…YPPHRPSPYS (93 aa)). The segment covering 17-28 (GETDKASGRWRQ) has biased composition (basic and acidic residues). 2 C2H2-type zinc fingers span residues 189–211 (YICP…IRSH) and 217–239 (YPCI…RKSH). Disordered regions lie at residues 272–303 (HSDG…PIPL), 340–416 (ESSQ…PPNT), 543–563 (SNSV…LRGS), and 751–985 (SHGH…SFER). 2 stretches are compositionally biased toward polar residues: residues 381-416 (SEPS…PPNT) and 543-556 (SNSV…NLTI). Over residues 751 to 760 (SHGHTERFDP) the composition is skewed to basic and acidic residues. Residues 766–777 (QPGSPSLVSEES) are compositionally biased toward polar residues. Basic and acidic residues predominate over residues 782-791 (DSDKMSDLGG). Residues 800–812 (SVIQHTNSLSRPN) show a composition bias toward polar residues. At S819 the chain carries Phosphoserine. Residues 863-878 (PSPSQQVQQQSYHTQP) show a composition bias toward low complexity. Basic and acidic residues predominate over residues 892-916 (RVTEEPDKPEKEKEAQSKEPEKPVE). A Nuclear localization signal motif is present at residues 937–943 (PKKKRLR). Phosphoserine occurs at positions 950, 955, 1048, 1443, and 1447. Positions 952–982 (GESSFESTGTGLSRSPSQESNLSHSSSFSMS) are enriched in low complexity. Residues 1485–1603 (KDLSRPQKPQ…LEEEGKGHKR (119 aa)) form a disordered region. Low complexity-rich tracts occupy residues 1510 to 1533 (SGSS…SPSS) and 1576 to 1586 (SDMSMSPQSSS). 2 C2H2-type zinc fingers span residues 1799–1821 (YICE…IRTH) and 1827–1851 (YVCK…SKAH). Disordered regions lie at residues 1882 to 1951 (AAEK…VNVG) and 2024 to 2129 (EECM…RRDL). Over residues 1899–1925 (DAEESDGEDGDDNDDDDEDEDDFDDQG) the composition is skewed to acidic residues. Positions 2029–2053 (PSEPSSSPRDFSPSSHHSSPGYDSS) are enriched in low complexity. 10 repeat units span residues 2053 to 2056 (SPCR), 2059 to 2062 (SPKR), 2071 to 2074 (SPRR), 2083 to 2086 (SPMR), 2089 to 2092 (SPRK), 2106 to 2109 (SPRR), 2112 to 2115 (SPRR), 2118 to 2121 (SPGK), 2130 to 2133 (SPRR), and 2145 to 2148 (SPRR). Residues 2053-2148 (SPCRDNSPKR…TTIRAPSPRR (96 aa)) form a 10 X 4 AA tandem repeats of S-P-[RGMKC]-[RK] region. A compositionally biased stretch (basic and acidic residues) spans 2078-2107 (PRRDLSPMRHLSPRKEAALRREMSQRDVSP). At S2118 the chain carries Phosphoserine. Disordered regions lie at residues 2242 to 2325 (PALS…QEEN), 2371 to 2403 (HFSR…SQTP), and 2423 to 2446 (HSSK…SQLH). 2 positions are modified to phosphoserine: S2297 and S2301. Residues 2307–2317 (KQSTSEDSLNA) show a composition bias toward polar residues. Residues 2387 to 2396 (PDLHDGEKDN) show a composition bias toward basic and acidic residues. Phosphoserine occurs at positions 2429 and 2431. A compositionally biased stretch (basic and acidic residues) spans 2433–2446 (EESKDPSSEKSQLH).

As to quaternary structure, interacts with TCF4. As to expression, expressed in brain and skeletal muscle.

It localises to the nucleus. This protein specifically binds to the DNA sequence 5'-GGGACTTTCC-3' which is found in the enhancer elements of numerous viral promoters such as those of SV40, CMV, or HIV1. In addition, related sequences are found in the enhancer elements of a number of cellular promoters, including those of the class I MHC, interleukin-2 receptor, somatostatin receptor II, and interferon-beta genes. It may act in T-cell activation. This Homo sapiens (Human) protein is Transcription factor HIVEP2 (HIVEP2).